Reading from the N-terminus, the 690-residue chain is Eukaryotic translation initiation factor 3 subunit B (690 aa).

The segment covering 1–11 has biased composition (basic and acidic residues); it reads MAKKKSEEHSS. Positions 1–33 are disordered; sequence MAKKKSEEHSSADANDSDYQEEPNFDDPPNFVD. Residues 15-25 show a composition bias toward acidic residues; sequence NDSDYQEEPNF. An RRM domain is found at 57–141; sequence SVVVVDNIPK…HTFAVNLFTD (85 aa). 5 WD repeats span residues 207-246, 293-331, 334-369, 442-484, and 530-575; these read TRER…KIQK, DGMS…LLDL, IKIP…TLME, EIRE…KPSL, and PDHF…IKRT. Residues 614 to 645 are a coiled coil; sequence QKDRLRLTRASKELLEKRSQLRETFMEYRNKR.

This sequence belongs to the eIF-3 subunit B family. As to quaternary structure, component of the eukaryotic translation initiation factor 3 (eIF-3) complex. The eIF-3 complex interacts with pix. Interacts with mxt.

It is found in the cytoplasm. In terms of biological role, RNA-binding component of the eukaryotic translation initiation factor 3 (eIF-3) complex, which is involved in protein synthesis of a specialized repertoire of mRNAs and, together with other initiation factors, stimulates binding of mRNA and methionyl-tRNAi to the 40S ribosome. The eIF-3 complex specifically targets and initiates translation of a subset of mRNAs involved in cell proliferation. In Drosophila willistoni (Fruit fly), this protein is Eukaryotic translation initiation factor 3 subunit B.